Consider the following 161-residue polypeptide: Spermidine N(1)-acetyltransferase (161 aa).

The N-acetyltransferase domain occupies 3–160; it reads IEIRKLSIED…SDFIMEKKYE (158 aa). Residues 92-94, 99-104, asparagine 131, and serine 136 each bind acetyl-CoA; these read LYL and THKKIG. Tyrosine 138 (proton donor) is an active-site residue. Position 140 (lysine 140) interacts with acetyl-CoA.

Belongs to the acetyltransferase family. In terms of assembly, monomer or homodimer.

It carries out the reaction an alkane-alpha,omega-diamine + acetyl-CoA = an N-acetylalkane-alpha,omega-diamine + CoA + H(+). Involved in the protection against polyamine toxicity by regulating their concentration. Could also be involved in the negative control of sporulation as well as production of degradative enzymes such as alpha-amylase, levansucrase and alkaline phosphatase. Catalyzes the transfer of an acetyl group from acetyl coenzyme A (AcCoA) to an acceptor substrate and release both CoA and the acetylated product. It can use a variety of substrates including spermidine, L-tryptophan, L-leucine, L-lysine, dopamine and tyramine. This chain is Spermidine N(1)-acetyltransferase, found in Thermoplasma acidophilum (strain ATCC 25905 / DSM 1728 / JCM 9062 / NBRC 15155 / AMRC-C165).